We begin with the raw amino-acid sequence, 549 residues long: Chaperonin GroEL 2 (549 aa).

ATP contacts are provided by residues 29-32, Lys50, 86-90, Gly414, 477-479, and Asp493; these read TLGP, DGTTT, and NAA.

The protein belongs to the chaperonin (HSP60) family. In terms of assembly, forms a cylinder of 14 subunits composed of two heptameric rings stacked back-to-back. Interacts with the co-chaperonin GroES.

It localises to the cytoplasm. The enzyme catalyses ATP + H2O + a folded polypeptide = ADP + phosphate + an unfolded polypeptide.. Together with its co-chaperonin GroES, plays an essential role in assisting protein folding. The GroEL-GroES system forms a nano-cage that allows encapsulation of the non-native substrate proteins and provides a physical environment optimized to promote and accelerate protein folding. The polypeptide is Chaperonin GroEL 2 (Myxococcus xanthus (strain DK1622)).